A 553-amino-acid polypeptide reads, in one-letter code: ATP synthase F(1) complex subunit alpha, mitochondrial (553 aa).

Residues 1 to 43 (MLSVRVAAAVVRALPRRAGLVSRNALGSSFIAARNFHASNTHL) constitute a mitochondrion transit peptide. Serine 53 and serine 65 each carry phosphoserine. At serine 76 the chain carries Phosphoserine; alternate. An O-linked (GlcNAc) serine; alternate glycan is attached at serine 76. Position 106 is a phosphoserine (serine 106). Residues lysine 123, lysine 126, and lysine 132 each carry the N6-acetyllysine modification. Position 134 is a phosphothreonine (threonine 134). Position 161 is an N6-acetyllysine; alternate (lysine 161). Lysine 161 is modified (N6-succinyllysine; alternate). A Phosphoserine modification is found at serine 166. Residue lysine 167 is modified to N6-acetyllysine; alternate. Position 167 is an N6-succinyllysine; alternate (lysine 167). A Phosphoserine modification is found at serine 184. An Omega-N-methylarginine modification is found at arginine 204. Residues glutamine 215, glycine 217, lysine 218, threonine 219, and serine 220 each contribute to the ATP site. Residue threonine 219 participates in Mg(2+) binding. Lysine 230 and lysine 239 each carry N6-acetyllysine; alternate. 2 positions are modified to N6-succinyllysine; alternate: lysine 230 and lysine 239. Lysine 240 is modified (N6-acetyllysine). N6-acetyllysine; alternate occurs at positions 261 and 305. N6-succinyllysine; alternate occurs at positions 261 and 305. Aspartate 312 lines the Mg(2+) pocket. Lysine 427 carries the N6-acetyllysine; alternate modification. Residue lysine 427 is modified to N6-succinyllysine; alternate. An N6-acetyllysine modification is found at lysine 434. 2 residues coordinate ATP: glutamine 473 and glutamine 475. An N6-acetyllysine; alternate mark is found at lysine 498, lysine 506, lysine 531, and lysine 539. Lysine 498, lysine 506, lysine 531, and lysine 539 each carry N6-succinyllysine; alternate. Lysine 541 is subject to N6-acetyllysine.

The protein belongs to the ATPase alpha/beta chains family. As to quaternary structure, homotrimer. Component of the ATP synthase complex composed at least of ATP5F1A/subunit alpha, ATP5F1B/subunit beta, ATP5MC1/subunit c (homooctomer), MT-ATP6/subunit a, MT-ATP8/subunit 8, ATP5ME/subunit e, ATP5MF/subunit f, ATP5MG/subunit g, ATP5MK/subunit k, ATP5MJ/subunit j, ATP5F1C/subunit gamma, ATP5F1D/subunit delta, ATP5F1E/subunit epsilon, ATP5PF/subunit F6, ATP5PB/subunit b, ATP5PD/subunit d, ATP5PO/subunit OSCP. ATP synthase complex consists of a soluble F(1) head domain (subunits alpha(3) and beta(3)) - the catalytic core - and a membrane F(0) domain - the membrane proton channel (subunits c, a, 8, e, f, g, k and j). These two domains are linked by a central stalk (subunits gamma, delta, and epsilon) rotating inside the F1 region and a stationary peripheral stalk (subunits F6, b, d, and OSCP). Interacts with ATPAF2. Interacts with HRG; the interaction occurs on the surface of T-cells and alters the cell morphology when associated with concanavalin (in vitro). Interacts with PLG (angiostatin peptide); the interaction inhibits most of the angiogenic properties of angiostatin. Interacts with BLOC1S1. Interacts with BCL2L1 isoform BCL-X(L); the interaction mediates the association of BCL2L1 isoform BCL-X(L) with the mitochondrial membrane F(1)F(0) ATP synthase and enhances neurons metabolic efficiency. Interacts with CLN5 and PPT1. Interacts with S100A1; this interaction increases F1-ATPase activity. Interacts with ABCB7; this interaction allows the regulation of cellular iron homeostasis and cellular reactive oxygen species (ROS) levels in cardiomyocytes. Post-translationally, acetylated on lysine residues. BLOC1S1 is required for acetylation.

Its subcellular location is the mitochondrion inner membrane. The protein resides in the cell membrane. In terms of biological role, subunit alpha, of the mitochondrial membrane ATP synthase complex (F(1)F(0) ATP synthase or Complex V) that produces ATP from ADP in the presence of a proton gradient across the membrane which is generated by electron transport complexes of the respiratory chain. ATP synthase complex consist of a soluble F(1) head domain - the catalytic core - and a membrane F(1) domain - the membrane proton channel. These two domains are linked by a central stalk rotating inside the F(1) region and a stationary peripheral stalk. During catalysis, ATP synthesis in the catalytic domain of F(1) is coupled via a rotary mechanism of the central stalk subunits to proton translocation. In vivo, can only synthesize ATP although its ATP hydrolase activity can be activated artificially in vitro. With the catalytic subunit beta (ATP5F1B), forms the catalytic core in the F(1) domain. Subunit alpha does not bear the catalytic high-affinity ATP-binding sites. This is ATP synthase F(1) complex subunit alpha, mitochondrial from Pan troglodytes (Chimpanzee).